We begin with the raw amino-acid sequence, 458 residues long: MKRSLLIGVAAFALLAGTAGLAGTAGAADLKFKPGEDSRFNWASLEEFKKGHDLKGQTLTIFGPWRGEDEALFKSVYAYFVEATGVELKYSSSENYEQQIVIDTQAGSPPDVAILPQPGLIADLAAKGLLTPLGDETKQWLLDNYAAGQSWVDLSTYNGKDGTSALYAFPYKIDVKSLVWYVPENFEDAGYEVPKTMEELKALTEKIAEDGEKPWCIGLGSGGATGWPATDWVEDLMLRTQPAETYDKWVKNEIPFTDAAVTGALEEFGWFARNDAFVDGGAAAVASTDFRDSPKGLFSSPPKCYLHHQASFIPSFFPEGKVVGEDADFFYMPPYESKKELGNPVLGAGTLAMITKDTPAARAFIEFLKTPIAHEVWMAQTSFLTPYKSVNVDVYGNPPLKKQGEILLNATTFRFDGSDLMPGKIGAGAFWTGMVDFVGGKSSADVAAGVQKAWDSIK.

The first 27 residues, 1–27 (MKRSLLIGVAAFALLAGTAGLAGTAGA), serve as a signal peptide directing secretion.

This sequence belongs to the bacterial solute-binding protein 1 family.

It localises to the periplasm. In terms of biological role, part of the binding-protein-dependent transport system for alpha-glucosides such as sucrose, maltose and trehalose. In Rhizobium meliloti (strain 1021) (Ensifer meliloti), this protein is Alpha-glucosides-binding periplasmic protein AglE (aglE).